Consider the following 575-residue polypeptide: Cytoskeleton-associated protein 4 (575 aa).

The interval 1–73 is disordered; sequence MPSAKQRGSK…RGRSSAATAN (73 aa). Topologically, residues 1 to 85 are cytoplasmic; that stretch reads MPSAKQRGSK…SASCSRRLGR (85 aa). A phosphoserine mark is found at S3, S17, and S19. The residue at position 21 (K21) is an N6-acetyllysine. The segment covering 37–53 has biased composition (pro residues); that stretch reads PAAPQQPQPPAPHPPQH. A lipid anchor (S-palmitoyl cysteine; by ZDHHC2) is attached at C79. Residues 86-108 traverse the membrane as a helical segment; sequence VLNFLFYLSLVAAAAFSGWYVHH. Residues 109-575 are Extracellular-facing; the sequence is VLEEVQQVRR…LKVEKIHEKI (467 aa). Positions 125-193 form a coiled coil; sequence RQRDELGQGL…QKLQNEILKD (69 aa). Phosphoserine is present on residues S211, S292, and S367. 2 coiled-coil regions span residues 236 to 438 and 507 to 575; these read DVQK…VGNL and SSLD…HEKI.

In terms of assembly, interacts with REEP5. In terms of processing, reversibly palmitoylated. Palmitoylation at Cys-79 by DHHC2 is required for its trafficking from the ER to the plasma membrane and for its perinuclear localization. Post-translationally, increased phosphorylation during mitosis prevents binding to microtubules. As to expression, expressed in cardiomyocytes (at protein level).

It is found in the endoplasmic reticulum membrane. The protein localises to the cell membrane. It localises to the cytoplasm. Its subcellular location is the cytoskeleton. The protein resides in the perinuclear region. Its function is as follows. High-affinity epithelial cell surface receptor for APF. Mediates the anchoring of the endoplasmic reticulum to microtubules. This is Cytoskeleton-associated protein 4 (Ckap4) from Mus musculus (Mouse).